The primary structure comprises 197 residues: Large ribosomal subunit protein uL13C (197 aa).

Belongs to the universal ribosomal protein uL13 family. As to quaternary structure, component of the large ribosomal subunit (LSU). Mature yeast ribosomes consist of a small (40S) and a large (60S) subunit. The 40S small subunit contains 1 molecule of ribosomal RNA (18S rRNA) and at least 33 different proteins. The large 60S subunit contains 3 rRNA molecules (25S, 5.8S and 5S rRNA) and at least 46 different proteins.

Its subcellular location is the cytoplasm. The protein resides in the nucleus. It localises to the nucleolus. In terms of biological role, component of the ribosome, a large ribonucleoprotein complex responsible for the synthesis of proteins in the cell. The small ribosomal subunit (SSU) binds messenger RNAs (mRNAs) and translates the encoded message by selecting cognate aminoacyl-transfer RNA (tRNA) molecules. The large subunit (LSU) contains the ribosomal catalytic site termed the peptidyl transferase center (PTC), which catalyzes the formation of peptide bonds, thereby polymerizing the amino acids delivered by tRNAs into a polypeptide chain. The nascent polypeptides leave the ribosome through a tunnel in the LSU and interact with protein factors that function in enzymatic processing, targeting, and the membrane insertion of nascent chains at the exit of the ribosomal tunnel. This is Large ribosomal subunit protein uL13C (rpl1603) from Schizosaccharomyces pombe (strain 972 / ATCC 24843) (Fission yeast).